Reading from the N-terminus, the 274-residue chain is Putative pyruvate, phosphate dikinase regulatory protein 1 (274 aa).

Position 149-156 (149-156 (GISRTSKT)) interacts with ADP.

This sequence belongs to the pyruvate, phosphate/water dikinase regulatory protein family. PDRP subfamily.

The enzyme catalyses N(tele)-phospho-L-histidyl/L-threonyl-[pyruvate, phosphate dikinase] + ADP = N(tele)-phospho-L-histidyl/O-phospho-L-threonyl-[pyruvate, phosphate dikinase] + AMP + H(+). The catalysed reaction is N(tele)-phospho-L-histidyl/O-phospho-L-threonyl-[pyruvate, phosphate dikinase] + phosphate + H(+) = N(tele)-phospho-L-histidyl/L-threonyl-[pyruvate, phosphate dikinase] + diphosphate. Bifunctional serine/threonine kinase and phosphorylase involved in the regulation of the pyruvate, phosphate dikinase (PPDK) by catalyzing its phosphorylation/dephosphorylation. The protein is Putative pyruvate, phosphate dikinase regulatory protein 1 of Listeria monocytogenes serotype 4b (strain F2365).